The following is a 269-amino-acid chain: Voltage-gated hydrogen channel 1 (269 aa).

Over 1–96 (MTSHDPKAVT…RLRKLFSSHR (96 aa)) the chain is Cytoplasmic. Thr29 carries the post-translational modification Phosphothreonine. The disordered stretch occupies residues 46 to 79 (ENEEEEEEPAPTSAEGEGNAEGPDAEAGSASTPR). Position 93 is a phosphoserine (Ser93). The chain crosses the membrane as a helical span at residues 97-117 (FQVIIICLVVLDALLVLAELL). At 118-134 (LDLKIIEPDEQDYAVTA) the chain is on the extracellular side. The helical transmembrane segment at 135-157 (FHYMSFAILVFFMLEIFFKIFVF) threads the bilayer. Residues 158-165 (RLEFFHHK) lie on the Cytoplasmic side of the membrane. A helical membrane pass occupies residues 166–186 (FEILDAFVVVVSFVLDLVLLF). Over 187–193 (KSHHFEA) the chain is Extracellular. Residues 194–214 (LGLLILLRLWRVARIINGIII) form a helical membrane-spanning segment. The Cytoplasmic segment spans residues 215–269 (SVKTRSERQILRLKQINIQLATKIQHLEFSCSEKEQEIERLNKLLKQNGLLGDVN). Residues 221–261 (ERQILRLKQINIQLATKIQHLEFSCSEKEQEIERLNKLLKQ) are a coiled coil.

It belongs to the voltage-gated proton channel (VPC) (TC 1.A.51) family. In terms of assembly, homodimer; each protomer forms its own proton conduction pathway. In terms of processing, phosphorylated in vitro by PRKCD. Phosphorylation may enhance channel gating. In terms of tissue distribution, enriched in immune tissues, such as bone marrow, macrophages and spleen.

The protein localises to the cell membrane. It localises to the apical cell membrane. The protein resides in the cytoplasmic vesicle. It is found in the phagosome membrane. Its subcellular location is the cell projection. The protein localises to the cilium. It localises to the flagellum membrane. The catalysed reaction is H(+)(in) = H(+)(out). With respect to regulation, the dimers display cooperative channel gating. The channel activity is inhibited by zinc ions. Voltage-gated proton-selective channel that conducts outward proton currents in response to intracellular acidification. Lacks a canonical ion-channel pore domain and mediates proton permeability via its voltage sensor domain. Provides for proton efflux that compensates for electron charge generated by NADPH oxidase activity either in the extracellular or phagosomal compartments, thus enabling the production of high levels of bactericidal reactive oxygen species during the respiratory burst. Opens when the pH of airway surface liquid exceeds 7 and contributes to respiratory epithelial acid secretion to maintain pH in the mucosa. The sequence is that of Voltage-gated hydrogen channel 1 from Mus musculus (Mouse).